Here is a 284-residue protein sequence, read N- to C-terminus: MGEPWAARGTEGAPARMPVVFTALWAAVVVLELTYVMVLGPGPPPLEPLARALQLALAAYQLLNLLGNMGLFLRSDPSIRGVMLAGRGLGQGWAYCYQCQSQVPPRSGHCSACRVCILRRDHHCRLLGRCVGFHNYRPFLCLLLHAAGVLLHISVLLSPALSALLQAHSALYTVALLLLPWLMLLTGKVSLAQFALAFVVDTCVAGALLCGAGLLFHGMLLLRGQTTWEWARGQHSYDLGMSHNLQAALGPRWALVWFWPFLASPLPGDGITFQTPTDVGLVTS.

The Cytoplasmic segment spans residues 1-18; it reads MGEPWAARGTEGAPARMP. The helical transmembrane segment at 19-39 threads the bilayer; it reads VVFTALWAAVVVLELTYVMVL. At 40 to 52 the chain is on the extracellular side; that stretch reads GPGPPPLEPLARA. A helical membrane pass occupies residues 53–73; that stretch reads LQLALAAYQLLNLLGNMGLFL. At 74-137 the chain is on the cytoplasmic side; the sequence is RSDPSIRGVM…GRCVGFHNYR (64 aa). The region spanning 94 to 144 is the DHHC domain; sequence AYCYQCQSQVPPRSGHCSACRVCILRRDHHCRLLGRCVGFHNYRPFLCLLL. The active-site S-palmitoyl cysteine intermediate is the C124. A helical membrane pass occupies residues 138–158; it reads PFLCLLLHAAGVLLHISVLLS. Topologically, residues 159 to 166 are extracellular; that stretch reads PALSALLQ. The chain crosses the membrane as a helical span at residues 167 to 187; sequence AHSALYTVALLLLPWLMLLTG. Over 188–195 the chain is Cytoplasmic; it reads KVSLAQFA. The chain crosses the membrane as a helical span at residues 196 to 216; the sequence is LAFVVDTCVAGALLCGAGLLF. Residues 217 to 284 lie on the Extracellular side of the membrane; that stretch reads HGMLLLRGQT…TPTDVGLVTS (68 aa).

Belongs to the DHHC palmitoyltransferase family.

The protein resides in the membrane. It carries out the reaction L-cysteinyl-[protein] + hexadecanoyl-CoA = S-hexadecanoyl-L-cysteinyl-[protein] + CoA. In terms of biological role, probable palmitoyltransferase that could catalyze the addition of palmitate onto various protein substrates. This chain is Probable palmitoyltransferase ZDHHC24 (Zdhhc24), found in Rattus norvegicus (Rat).